Here is a 99-residue protein sequence, read N- to C-terminus: Malonate decarboxylase acyl carrier protein (99 aa).

An O-(phosphoribosyl dephospho-coenzyme A)serine modification is found at Ser25.

This sequence belongs to the MdcC family. Covalently binds the prosthetic group of malonate decarboxylase.

The protein resides in the cytoplasm. Subunit of malonate decarboxylase, it is an acyl carrier protein to which acetyl and malonyl thioester residues are bound via a 2'-(5''-phosphoribosyl)-3'-dephospho-CoA prosthetic group and turn over during the catalytic mechanism. The polypeptide is Malonate decarboxylase acyl carrier protein (Azotobacter vinelandii (strain DJ / ATCC BAA-1303)).